The chain runs to 364 residues: MNNLLLYCRPGFEKEAAAEITERASNMQCYGFARVKDDSGYVIFELYDEEQADLLARKLPFRELIFIRQMLVVTHELKDLDVADRISPIIEATSEYTICGDLRVETADTNEAKELSAFCRKFTVPLRQALRSKELLTKKETPHRPVFHAFFMANDHLLLGYSYSFNNSEFHMGIPRLRCPPDAPSRSSLKLEEAFYVFVPREEWDLRLTSGMKAVDLGACPGGWTHQLVRRGMMVTAVDNGTMAQSLMDTGQVKHLRDDGFVWRPSKKNIYWLVCDMVEKPARVVHMIADWFRENDCQEAMFNLKLPMKKRYAEAVHNIEVLRGLLKEVDNAFVIQAKQLYHDREEITVHVYNKYWVSKLEAKE.

S-adenosyl-L-methionine contacts are provided by residues S187, 220 to 223 (CPGG), D239, D259, and D276. K305 acts as the Proton acceptor in catalysis.

Belongs to the class I-like SAM-binding methyltransferase superfamily. RNA methyltransferase RlmE family. RlmM subfamily. As to quaternary structure, monomer.

The protein resides in the cytoplasm. The catalysed reaction is cytidine(2498) in 23S rRNA + S-adenosyl-L-methionine = 2'-O-methylcytidine(2498) in 23S rRNA + S-adenosyl-L-homocysteine + H(+). Catalyzes the 2'-O-methylation at nucleotide C2498 in 23S rRNA. This Aeromonas salmonicida (strain A449) protein is Ribosomal RNA large subunit methyltransferase M.